A 191-amino-acid polypeptide reads, in one-letter code: Pyridoxal 5'-phosphate synthase subunit PdxT (191 aa).

48–50 (GES) provides a ligand contact to L-glutamine. The active-site Nucleophile is Cys81. L-glutamine-binding positions include Arg109 and 136-137 (IR). Catalysis depends on charge relay system residues His172 and Glu174.

The protein belongs to the glutaminase PdxT/SNO family. In the presence of PdxS, forms a dodecamer of heterodimers. Only shows activity in the heterodimer.

The enzyme catalyses aldehydo-D-ribose 5-phosphate + D-glyceraldehyde 3-phosphate + L-glutamine = pyridoxal 5'-phosphate + L-glutamate + phosphate + 3 H2O + H(+). The catalysed reaction is L-glutamine + H2O = L-glutamate + NH4(+). Its pathway is cofactor biosynthesis; pyridoxal 5'-phosphate biosynthesis. Functionally, catalyzes the hydrolysis of glutamine to glutamate and ammonia as part of the biosynthesis of pyridoxal 5'-phosphate. The resulting ammonia molecule is channeled to the active site of PdxS. This Thermus thermophilus (strain ATCC 27634 / DSM 579 / HB8) protein is Pyridoxal 5'-phosphate synthase subunit PdxT.